A 555-amino-acid polypeptide reads, in one-letter code: DNA repair and recombination protein rhm52 (555 aa).

A DNA-binding region spans residues 148–152; sequence KRALR. Disordered stretches follow at residues 197-232 and 251-555; these read VVAE…DSFD and HPDE…MKLN. Over residues 260–276 the composition is skewed to low complexity; that stretch reads NSHASGSSGNTGASTTN. Polar residues-rich tracts occupy residues 283–300 and 312–334; these read SGNQ…SRMN and TPNH…QNNH. Composition is skewed to low complexity over residues 354–375 and 382–404; these read NNNN…GPQQ and NGAA…AVAR. Residues 468 to 478 are compositionally biased toward polar residues; the sequence is DNPSNNAGNGV. The segment covering 479–490 has biased composition (low complexity); it reads QNQPQKPQPSQQ. The span at 491–500 shows a compositional bias: polar residues; it reads RGSILNPQFD. Low complexity predominate over residues 536–547; the sequence is PNGTSNGNGTPG.

Belongs to the RAD52 family. Part of a complex that includes RAD51, RAD52 and RAD59.

The protein resides in the nucleus. In terms of biological role, involved in DNA double-strand break (DSB) repair and recombination. Promotes the annealing of complementary single-stranded DNA and by stimulation of the RAD51 recombinase. This chain is DNA repair and recombination protein rhm52 (RHM52), found in Pyricularia oryzae (strain 70-15 / ATCC MYA-4617 / FGSC 8958) (Rice blast fungus).